A 725-amino-acid chain; its full sequence is Putative oligopeptide transporter YGL114W (725 aa).

9 helical membrane passes run 28-48, 134-154, 254-274, 353-373, 449-469, 472-492, 564-584, 644-664, and 697-717; these read ATIA…QFGL, FREL…FAVP, IIIL…SYFV, WILW…FIVV, ISGC…LFGI, IPLY…ILGI, FCAQ…MYLC, YGYG…GIFN, and IVFS…NMLF.

The protein belongs to the oligopeptide OPT transporter family.

Its subcellular location is the membrane. The sequence is that of Putative oligopeptide transporter YGL114W from Saccharomyces cerevisiae (strain ATCC 204508 / S288c) (Baker's yeast).